Here is a 148-residue protein sequence, read N- to C-terminus: Large ribosomal subunit protein uL13 (148 aa).

The protein belongs to the universal ribosomal protein uL13 family. Part of the 50S ribosomal subunit.

This protein is one of the early assembly proteins of the 50S ribosomal subunit, although it is not seen to bind rRNA by itself. It is important during the early stages of 50S assembly. This is Large ribosomal subunit protein uL13 from Sulfolobus acidocaldarius (strain ATCC 33909 / DSM 639 / JCM 8929 / NBRC 15157 / NCIMB 11770).